The sequence spans 254 residues: Alcohol dehydrogenase (254 aa).

Residue 10–33 (FVAGLGGIGLDTSRELVKRDLKNL) participates in NAD(+) binding. Substrate is bound at residue Ser-138. Residue Tyr-151 is the Proton acceptor of the active site.

This sequence belongs to the short-chain dehydrogenases/reductases (SDR) family. As to quaternary structure, homodimer.

It catalyses the reaction a primary alcohol + NAD(+) = an aldehyde + NADH + H(+). The catalysed reaction is a secondary alcohol + NAD(+) = a ketone + NADH + H(+). This is Alcohol dehydrogenase (Adh) from Drosophila madeirensis (Fruit fly).